Reading from the N-terminus, the 461-residue chain is Xyloglucan 6-xylosyltransferase 2 (461 aa).

Residues 1-20 (MIERCLGAYRCRRIQRALRQ) lie on the Cytoplasmic side of the membrane. A helical; Signal-anchor for type II membrane protein transmembrane segment spans residues 21–40 (LKVTILCLLLTVVVLRSTIG). Residues 41–461 (AGKFGTPEQD…KAVKVQTNQV (421 aa)) lie on the Lumenal side of the membrane. A disordered region spans residues 74–95 (QTGGDSSSGDGGGNSGGSNNYE). Residue Asn-432 is glycosylated (N-linked (GlcNAc...) asparagine).

The protein belongs to the glycosyltransferase 34 family. As to quaternary structure, homodimer. Interacts with XXT1 and XXT5. Interacts with FUT1 and XLT2.

It localises to the golgi apparatus membrane. It carries out the reaction Transfers an alpha-D-xylosyl residue from UDP-D-xylose to a glucose residue in xyloglucan, forming an alpha-(1-&gt;6)-D-xylosyl-D-glucose linkage.. Xylosyltransferase specific to UDP-D-xylose that accepts both cellopentaose and cellohexaose as substrates, with a better use of cellohexaose, to produce xyloglucan. Adds preferentially the first xylosyl residue to the fourth glucosyl residue from the reducing end of both acceptors. Transfer one xylose mainly to the second glucose residue from the non-reducing end. The acceptor should have a minimum of four glucose residues. Associates with other xyloglucan-synthesizing enzymes to form multiprotein complexes for xyloglucan synthesis in the Golgi. The protein is Xyloglucan 6-xylosyltransferase 2 (XXT2) of Arabidopsis thaliana (Mouse-ear cress).